Consider the following 96-residue polypeptide: Co-chaperonin GroES (96 aa).

It belongs to the GroES chaperonin family. Heptamer of 7 subunits arranged in a ring. Interacts with the chaperonin GroEL.

Its subcellular location is the cytoplasm. In terms of biological role, together with the chaperonin GroEL, plays an essential role in assisting protein folding. The GroEL-GroES system forms a nano-cage that allows encapsulation of the non-native substrate proteins and provides a physical environment optimized to promote and accelerate protein folding. GroES binds to the apical surface of the GroEL ring, thereby capping the opening of the GroEL channel. This is Co-chaperonin GroES from Aggregatibacter actinomycetemcomitans (Actinobacillus actinomycetemcomitans).